Here is a 302-residue protein sequence, read N- to C-terminus: Light-independent protochlorophyllide reductase iron-sulfur ATP-binding protein (302 aa).

Residues 1 to 10 (MSTATISPSQ) show a composition bias toward polar residues. Residues 1 to 21 (MSTATISPSQIGRGARPDGEG) are disordered. Residues 46 to 51 (GIGKST) and Lys-75 contribute to the ATP site. Ser-50 contacts Mg(2+). 2 residues coordinate [4Fe-4S] cluster: Cys-131 and Cys-165. Residues 216–217 (NR) and 240–242 (PAL) contribute to the ATP site.

It belongs to the NifH/BchL/ChlL family. Homodimer. Protochlorophyllide reductase is composed of three subunits; BchL, BchN and BchB. [4Fe-4S] cluster serves as cofactor.

The enzyme catalyses chlorophyllide a + oxidized 2[4Fe-4S]-[ferredoxin] + 2 ADP + 2 phosphate = protochlorophyllide a + reduced 2[4Fe-4S]-[ferredoxin] + 2 ATP + 2 H2O. Its pathway is porphyrin-containing compound metabolism; bacteriochlorophyll biosynthesis (light-independent). Functionally, component of the dark-operative protochlorophyllide reductase (DPOR) that uses Mg-ATP and reduced ferredoxin to reduce ring D of protochlorophyllide (Pchlide) to form chlorophyllide a (Chlide). This reaction is light-independent. The L component serves as a unique electron donor to the NB-component of the complex, and binds Mg-ATP. This is Light-independent protochlorophyllide reductase iron-sulfur ATP-binding protein from Rubrivivax gelatinosus (strain NBRC 100245 / IL144).